Reading from the N-terminus, the 182-residue chain is ATP-dependent protease subunit HslV (182 aa).

Thr12 is a catalytic residue. Na(+)-binding residues include Ala167, Cys170, and Thr173.

The protein belongs to the peptidase T1B family. HslV subfamily. In terms of assembly, a double ring-shaped homohexamer of HslV is capped on each side by a ring-shaped HslU homohexamer. The assembly of the HslU/HslV complex is dependent on binding of ATP.

Its subcellular location is the cytoplasm. The enzyme catalyses ATP-dependent cleavage of peptide bonds with broad specificity.. With respect to regulation, allosterically activated by HslU binding. In terms of biological role, protease subunit of a proteasome-like degradation complex believed to be a general protein degrading machinery. The polypeptide is ATP-dependent protease subunit HslV (Chlorobium limicola (strain DSM 245 / NBRC 103803 / 6330)).